A 498-amino-acid chain; its full sequence is TORTIFOLIA1-like protein 5 (498 aa).

5 HEAT repeats span residues 56 to 93, 97 to 134, 136 to 173, 177 to 214, and 219 to 257; these read ETFS…SHGD, PHLS…NITG, PFSI…AADE, EQLQ…AVGG, and KAVL…VEEE. The segment at 296–423 is disordered; sequence EGDSTEVSES…SSSQAKSNAE (128 aa). A compositionally biased stretch (low complexity) spans 300 to 322; sequence TEVSESSSSSKSASSGLSATSGK. Positions 343-366 are enriched in basic and acidic residues; it reads NDVEPLDRGDTPKDVEQEAVVSKE. Polar residues predominate over residues 390–400; that stretch reads NGSNKSQVVQS. Residue Ser426 is modified to Phosphoserine.

This chain is TORTIFOLIA1-like protein 5, found in Arabidopsis thaliana (Mouse-ear cress).